A 442-amino-acid polypeptide reads, in one-letter code: Exodeoxyribonuclease 7 large subunit (442 aa).

It belongs to the XseA family. In terms of assembly, heterooligomer composed of large and small subunits.

The protein localises to the cytoplasm. It catalyses the reaction Exonucleolytic cleavage in either 5'- to 3'- or 3'- to 5'-direction to yield nucleoside 5'-phosphates.. Bidirectionally degrades single-stranded DNA into large acid-insoluble oligonucleotides, which are then degraded further into small acid-soluble oligonucleotides. This is Exodeoxyribonuclease 7 large subunit from Shewanella sediminis (strain HAW-EB3).